The chain runs to 150 residues: Large ribosomal subunit protein bL9 (150 aa).

Belongs to the bacterial ribosomal protein bL9 family.

In terms of biological role, binds to the 23S rRNA. The polypeptide is Large ribosomal subunit protein bL9 (Limosilactobacillus fermentum (strain NBRC 3956 / LMG 18251) (Lactobacillus fermentum)).